The primary structure comprises 207 residues: Putative 3-methyladenine DNA glycosylase (207 aa).

Belongs to the DNA glycosylase MPG family.

The sequence is that of Putative 3-methyladenine DNA glycosylase from Listeria monocytogenes serovar 1/2a (strain ATCC BAA-679 / EGD-e).